The primary structure comprises 416 residues: Serine hydroxymethyltransferase 1 (416 aa).

(6S)-5,6,7,8-tetrahydrofolate-binding positions include leucine 121 and 125–127 (GHL). Lysine 229 carries the post-translational modification N6-(pyridoxal phosphate)lysine. (6S)-5,6,7,8-tetrahydrofolate is bound by residues glutamate 245 and 354 to 356 (SPF).

It belongs to the SHMT family. As to quaternary structure, homodimer. The cofactor is pyridoxal 5'-phosphate.

It localises to the cytoplasm. It catalyses the reaction (6R)-5,10-methylene-5,6,7,8-tetrahydrofolate + glycine + H2O = (6S)-5,6,7,8-tetrahydrofolate + L-serine. The protein operates within one-carbon metabolism; tetrahydrofolate interconversion. It participates in amino-acid biosynthesis; glycine biosynthesis; glycine from L-serine: step 1/1. Functionally, catalyzes the reversible interconversion of serine and glycine with tetrahydrofolate (THF) serving as the one-carbon carrier. This reaction serves as the major source of one-carbon groups required for the biosynthesis of purines, thymidylate, methionine, and other important biomolecules. Also exhibits THF-independent aldolase activity toward beta-hydroxyamino acids, producing glycine and aldehydes, via a retro-aldol mechanism. In Photobacterium profundum (strain SS9), this protein is Serine hydroxymethyltransferase 1.